Reading from the N-terminus, the 156-residue chain is Photosystem I reaction center subunit XI (156 aa).

Helical transmembrane passes span 75–95 (GGLL…SLYA) and 128–148 (FFIG…ALYF).

This sequence belongs to the PsaL family.

The protein localises to the cellular thylakoid membrane. The polypeptide is Photosystem I reaction center subunit XI (Crocosphaera subtropica (strain ATCC 51142 / BH68) (Cyanothece sp. (strain ATCC 51142))).